The sequence spans 333 residues: Glycerol-3-phosphate dehydrogenase [NAD(P)+] (333 aa).

Positions 10, 11, and 105 each coordinate NADPH. 3 residues coordinate sn-glycerol 3-phosphate: Lys-105, Gly-136, and Thr-138. Ala-140 is an NADPH binding site. Residues Lys-191, Asp-244, Ser-254, Arg-255, and Asn-256 each coordinate sn-glycerol 3-phosphate. The active-site Proton acceptor is Lys-191. Residue Arg-255 coordinates NADPH. The NADPH site is built by Val-279 and Glu-281.

This sequence belongs to the NAD-dependent glycerol-3-phosphate dehydrogenase family.

The protein resides in the cytoplasm. The catalysed reaction is sn-glycerol 3-phosphate + NAD(+) = dihydroxyacetone phosphate + NADH + H(+). The enzyme catalyses sn-glycerol 3-phosphate + NADP(+) = dihydroxyacetone phosphate + NADPH + H(+). It participates in membrane lipid metabolism; glycerophospholipid metabolism. Catalyzes the reduction of the glycolytic intermediate dihydroxyacetone phosphate (DHAP) to sn-glycerol 3-phosphate (G3P), the key precursor for phospholipid synthesis. In Trichlorobacter lovleyi (strain ATCC BAA-1151 / DSM 17278 / SZ) (Geobacter lovleyi), this protein is Glycerol-3-phosphate dehydrogenase [NAD(P)+].